Reading from the N-terminus, the 1109-residue chain is Protein argonaute 3 (1109 aa).

A compositionally biased stretch (basic and acidic residues) spans 1 to 13 (MAGRGGRDPRRGY). 2 disordered regions span residues 1 to 83 (MAGR…GLVR) and 125 to 220 (DHRD…PLSK). Composition is skewed to gly residues over residues 14–30 (DGGY…GGTN), 37–54 (RGGG…GGRG), and 62–83 (DVLG…GLVR). The segment covering 125-134 (DHRDQHDHQS) has biased composition (basic and acidic residues). The span at 135 to 161 (QRHHHRHHHHQRQRHHHHHQRQQRRGS) shows a compositional bias: basic residues. The PAZ domain occupies 411–521 (SVLDLVKTMK…VPIEFCNIPE (111 aa)). The segment covering 527–545 (VARLDDKKSDNKGEQEKPS) has biased composition (basic and acidic residues). Positions 527–548 (VARLDDKKSDNKGEQEKPSTKT) are disordered. One can recognise a Piwi domain in the interval 720-1023 (LLFCPMLNRC…AAYRGRLYYE (304 aa)).

It belongs to the argonaute family. Ago subfamily.

Probably involved in the RNA silencing pathway. May bind to short RNAs such as microRNAs (miRNAs) or short interfering RNAs (siRNAs), and represses the translation of mRNAs which are complementary to them. This is Protein argonaute 3 (AGO3) from Oryza sativa subsp. japonica (Rice).